Reading from the N-terminus, the 342-residue chain is MKQLESFEIPRTVVFGPGAILKIPDIVSGLRVGKVLIISGKSATQQYAKTVASLLSGYSAEILKYDEVELEKSGFDLIIGVGGGRPLDMAKVYSYVHKRPLIVVPTSASHDGIASPYISYILAEKVKRYGKVVASPIAIVADTSIILSAPRRLLRAGVGDLLGKVVAVRDWQLAHRLKGEEYSEYAALLSLSSYRIVVANAGKIGNFVREEDVRALVKALIGCGVAMGIAGSSRPCSGSEHLFAHAIERRLEGAEGEAIHGELVALGAIVMAYLHGINWRRIKKAAGAVGLPTTLKQAGIDLDLAIEALTTAHTLRPDRYTILGDGLSASAARKALEDTELI.

NAD(+) is bound by residues 84–88 and 106–109; these read GRPLD and TSAS. Aspartate 111 is a binding site for substrate. Serine 115 lines the NAD(+) pocket. Aspartate 160 serves as a coordination point for substrate. Zn(2+) is bound by residues aspartate 160 and histidine 241. Histidine 245 contacts substrate. Histidine 260 contacts Zn(2+).

The protein belongs to the glycerol-1-phosphate dehydrogenase family. In terms of assembly, homodimer. Zn(2+) is required as a cofactor.

It localises to the cytoplasm. It catalyses the reaction sn-glycerol 1-phosphate + NAD(+) = dihydroxyacetone phosphate + NADH + H(+). It carries out the reaction sn-glycerol 1-phosphate + NADP(+) = dihydroxyacetone phosphate + NADPH + H(+). It functions in the pathway membrane lipid metabolism; glycerophospholipid metabolism. Its function is as follows. Catalyzes the NAD(P)H-dependent reduction of dihydroxyacetonephosphate (DHAP or glycerone phosphate) to glycerol 1-phosphate (G1P). The G1P thus generated is used as the glycerophosphate backbone of phospholipids in the cellular membranes of Archaea. This Pyrobaculum neutrophilum (strain DSM 2338 / JCM 9278 / NBRC 100436 / V24Sta) (Thermoproteus neutrophilus) protein is Glycerol-1-phosphate dehydrogenase [NAD(P)+].